We begin with the raw amino-acid sequence, 129 residues long: Large ribosomal subunit protein bL21 (129 aa).

This sequence belongs to the bacterial ribosomal protein bL21 family. In terms of assembly, part of the 50S ribosomal subunit. Contacts protein L20.

Functionally, this protein binds to 23S rRNA in the presence of protein L20. In Prochlorococcus marinus (strain MIT 9313), this protein is Large ribosomal subunit protein bL21.